Reading from the N-terminus, the 921-residue chain is TRPM8 channel-associated factor 1 (921 aa).

The Peptidase M60 domain maps to 542 to 841 (YCWMSTGLYI…TYLQLQEAFG (300 aa)).

This sequence belongs to the TCAF family. Interacts with TRPM8 (via N-terminus and C-terminus domains); the interaction inhibits TRPM8 channel activity. Interacts with TRPV6. As to expression, isoform 2 is expressed in the prostate and strongly expressed in cancerous prostate samples.

It localises to the cell membrane. In terms of biological role, positively regulates the plasma membrane cation channel TRPM8 activity. Involved in the recruitment of TRPM8 to the cell surface. Promotes prostate cancer cell migration inhibition in a TRPM8-dependent manner. The chain is TRPM8 channel-associated factor 1 from Homo sapiens (Human).